Reading from the N-terminus, the 794-residue chain is Protein sel-1 homolog 1 (794 aa).

A signal peptide spans 1–21 (MRVRIGLTLLLCAVLLSLASA). The disordered stretch occupies residues 21–50 (ASSDEEGSQDESLDSKTTLTSDESVKDHTT). The interaction with ERLEC1, OS9 and SYVN1 stretch occupies residues 22–737 (SSDEEGSQDE…DMFTQLDMDQ (716 aa)). Over 22 to 738 (SSDEEGSQDE…MFTQLDMDQL (717 aa)) the chain is Lumenal. A compositionally biased stretch (acidic residues) spans 23–32 (SDEEGSQDES). A Phosphoserine modification is found at S63. A compositionally biased stretch (acidic residues) spans 64–77 (EESELESSIQEEED). The tract at residues 64 to 109 (EESELESSIQEEEDSLKSQEGESVTEDISFLESPNPENKDYEEPKK) is disordered. The 49-residue stretch at 122-170 (AHGEPCHFPFLFLDKEYDECTSDGREDGRLWCATTYDYKADEKWGFCET) folds into the Fibronectin type-II domain. 2 disulfide bridges follow: C127-C153 and C141-C168. Sel1-like repeat units lie at residues 183 to 218 (AEMM…SMNH), 219 to 254 (TKAL…EEGS), 255 to 290 (PKGQ…LGGN), 291 to 326 (LIAH…NHVA), 373 to 409 (VQAQ…NAGN), 410 to 446 (SHAM…DMGN), 447 to 482 (PVGQ…EQGW), 483 to 518 (VDGQ…QGGH), and 519 to 554 (ILAF…ERGR). N-linked (GlcNAc...) asparagine glycosylation is found at N195 and N217. N-linked (GlcNAc...) asparagine glycosylation is present at N272. The segment at 352-537 (NSGMLEEDLI…MHASGTGVMR (186 aa)) is important for homodimerization and oligomerization. N431 carries N-linked (GlcNAc...) asparagine glycosylation. N-linked (GlcNAc...) asparagine glycosylation occurs at N608. 2 Sel1-like repeats span residues 627–662 (TVAR…EQQH) and 664–699 (AQAM…EASP). The segment at 643-723 (TDVDYETAFI…VVYFLQYIRE (81 aa)) is interaction with SYVN1. The segment at 738–794 (LLGPEWDLYLMTIIALLLGTVIAYRQRQHQDMPAPRPPGPRPAPPQQEGPPEQQPPQ) is mediates retention in the endoplasmic reticulum. A helical membrane pass occupies residues 739–759 (LGPEWDLYLMTIIALLLGTVI). The Cytoplasmic segment spans residues 760–794 (AYRQRQHQDMPAPRPPGPRPAPPQQEGPPEQQPPQ). Residues 766–794 (HQDMPAPRPPGPRPAPPQQEGPPEQQPPQ) are disordered. The span at 771-794 (APRPPGPRPAPPQQEGPPEQQPPQ) shows a compositional bias: pro residues.

Belongs to the sel-1 family. As to quaternary structure, homodimer and homooligomer. May form a complex with ERLEC1, HSPA5, OS9, and SYVN1. Interacts with FOXRED2 and EDEM1. Interacts with LPL. Interacts with LMF1; may stabilize the complex formed by LPL and LMF1 and thereby promote the export of LPL dimers. Component of the HRD1 complex, which comprises at least SYNV1/HRD1, DERL1/2, FAM8A1, HERPUD1/HERP, OS9, SEL1L and UBE2J1. SYNV1 assembles with SEL1L and FAM8A1 through its transmembrane domains, but interaction with its cytoplasmic domain is required to confer stability to FAM8A1 and enhance recruitment of HERPUD1. The interaction with SYNV1/HRD1 is direct. In terms of assembly, (Microbial infection) Interacts with human cytomegalovirus protein UL148. Post-translationally, N-glycosylated. Highly expressed in pancreas.

Its subcellular location is the endoplasmic reticulum membrane. In terms of biological role, plays a role in the endoplasmic reticulum quality control (ERQC) system also called ER-associated degradation (ERAD) involved in ubiquitin-dependent degradation of misfolded endoplasmic reticulum proteins. Enhances SYVN1 stability. Plays a role in LPL maturation and secretion. Required for normal differentiation of the pancreas epithelium, and for normal exocrine function and survival of pancreatic cells. May play a role in Notch signaling. The chain is Protein sel-1 homolog 1 from Homo sapiens (Human).